We begin with the raw amino-acid sequence, 338 residues long: Malate dehydrogenase, mitochondrial (338 aa).

The transit peptide at 1-24 (MLSALARPAGAALRRSFSTSAQNN) directs the protein to the mitochondrion. Residues 31-37 (GASGGIG) and Asp57 contribute to the NAD(+) site. An O-linked (GlcNAc) serine glycan is attached at Ser33. N6-acetyllysine; alternate is present on residues Lys78 and Lys91. N6-succinyllysine; alternate occurs at positions 78 and 91. Residues Arg104 and Arg110 each coordinate substrate. NAD(+) contacts are provided by residues Asn117 and 140–142 (IAN). Residue Asn142 participates in substrate binding. At Lys165 the chain carries N6-acetyllysine. Arg176 lines the substrate pocket. An N6-acetyllysine; alternate modification is found at Lys185. Lys185 carries the N6-succinyllysine; alternate modification. The active-site Proton acceptor is the His200. Lys203 is subject to N6-succinyllysine. Residues Lys215 and Lys239 each carry the N6-acetyllysine; alternate modification. An N6-succinyllysine; alternate mark is found at Lys215 and Lys239. Lys239 carries the post-translational modification N6-malonyllysine; alternate. Phosphoserine is present on Ser246. Met251 is a binding site for NAD(+). At Lys269 the chain carries N6-succinyllysine. Lys296, Lys301, and Lys307 each carry N6-acetyllysine; alternate. An N6-succinyllysine; alternate mark is found at Lys296, Lys301, and Lys307. Lys307 bears the N6-malonyllysine; alternate mark. Thr309 carries the phosphothreonine modification. N6-acetyllysine; alternate occurs at positions 314 and 324. An N6-succinyllysine; alternate mark is found at Lys314 and Lys324. Ser326 carries the phosphoserine modification. Lys328, Lys329, and Lys335 each carry N6-acetyllysine; alternate. At Lys328 the chain carries N6-succinyllysine; alternate. An N6-malonyllysine; alternate modification is found at Lys329. N6-succinyllysine; alternate is present on Lys335.

It belongs to the LDH/MDH superfamily. MDH type 1 family. In terms of assembly, homodimer. In terms of processing, acetylation is enhanced after treatment either with trichostin A (TCA) or with nicotinamide (NAM) with the appearance of tri- and tetraacetylations. Glucose also increases acetylation. Acetylation of Lys-239 and Lys-314 is observed in liver mitochondria from fasted mice but not from fed mice.

Its subcellular location is the mitochondrion matrix. It carries out the reaction (S)-malate + NAD(+) = oxaloacetate + NADH + H(+). With respect to regulation, enzyme activity is enhanced by acetylation. This Mus musculus (Mouse) protein is Malate dehydrogenase, mitochondrial (Mdh2).